The chain runs to 60 residues: Regulatory protein DegR (60 aa).

Stabilizes the phosphorylated form of DegU, leading to enhanced production of levansucrase, alkaline protease, and neutral protease. The sequence is that of Regulatory protein DegR (degR) from Bacillus subtilis subsp. natto.